Reading from the N-terminus, the 487-residue chain is Glutamyl-tRNA(Gln) amidotransferase subunit A (487 aa).

Residues lysine 77 and serine 152 each act as charge relay system in the active site. Serine 176 acts as the Acyl-ester intermediate in catalysis.

This sequence belongs to the amidase family. GatA subfamily. Heterotrimer of A, B and C subunits.

It catalyses the reaction L-glutamyl-tRNA(Gln) + L-glutamine + ATP + H2O = L-glutaminyl-tRNA(Gln) + L-glutamate + ADP + phosphate + H(+). In terms of biological role, allows the formation of correctly charged Gln-tRNA(Gln) through the transamidation of misacylated Glu-tRNA(Gln) in organisms which lack glutaminyl-tRNA synthetase. The reaction takes place in the presence of glutamine and ATP through an activated gamma-phospho-Glu-tRNA(Gln). The polypeptide is Glutamyl-tRNA(Gln) amidotransferase subunit A (Limosilactobacillus fermentum (strain NBRC 3956 / LMG 18251) (Lactobacillus fermentum)).